A 956-amino-acid polypeptide reads, in one-letter code: ATPase 11, plasma membrane-type (956 aa).

Over 1–65 (MGDKEEVLEA…EKKESKFLKF (65 aa)) the chain is Cytoplasmic. A helical transmembrane segment spans residues 66 to 85 (LGFMWNPLSWVMEAAAIMAI). Residues 86 to 97 (ALANGGGKPPDW) lie on the Extracellular side of the membrane. The chain crosses the membrane as a helical span at residues 98 to 118 (QDFVGIITLLVINSTISFIEE). Over 119 to 247 (NNAGNAAAAL…GHFQQVLTAI (129 aa)) the chain is Cytoplasmic. The chain crosses the membrane as a helical span at residues 248 to 268 (GNFCICSIAVGMIIEIVVMYP). Residues 269–277 (IQHRAYRPG) lie on the Extracellular side of the membrane. Residues 278 to 295 (IDNLLVLLIGGIPIAMPT) traverse the membrane as a helical segment. The Cytoplasmic portion of the chain corresponds to 296–647 (VLSVTMAIGS…TSRAIFQRMK (352 aa)). The active-site 4-aspartylphosphate intermediate is the D333. Mg(2+)-binding residues include D592 and D596. Residues 648-669 (NYTIYAVSITIRIVLGFMLLAL) form a helical membrane-spanning segment. Residues 670–674 (IWKFD) lie on the Extracellular side of the membrane. A helical membrane pass occupies residues 675–697 (FPPFMVLIIAILNDGTIMTISKD). The Cytoplasmic segment spans residues 698–713 (RVKPSPLPDSWKLSEI). A helical transmembrane segment spans residues 714–734 (FATGVVFGSYMAMMTVIFFWA). Residues 735 to 759 (AYKTDFFPRTFGVSTLEKTAHDDFR) lie on the Extracellular side of the membrane. The chain crosses the membrane as a helical span at residues 760–780 (KLASAIYLQVSIISQALIFVT). Residues 781–792 (RSRSWSYVERPG) are Cytoplasmic-facing. A helical membrane pass occupies residues 793–813 (MLLVVAFILAQLVATLIAVYA). Residues 814 to 821 (NWSFAAIE) lie on the Extracellular side of the membrane. Residues 822–842 (GIGWGWAGVIWLYNIVFYIPL) traverse the membrane as a helical segment. Residues 843–956 (DIIKFLIRYA…IETIQQAYTV (114 aa)) are Cytoplasmic-facing. Position 889 is a phosphothreonine (T889). S938 carries the phosphoserine modification. The interval 954–956 (YTV) is interaction with 14-3-3 proteins. A Phosphothreonine modification is found at T955.

The protein belongs to the cation transport ATPase (P-type) (TC 3.A.3) family. Type IIIA subfamily. In terms of assembly, binds to 14-3-3 proteins. The binding is induced by phosphorylation of Thr-955. Binding to 14-3-3 proteins activates the H(+)-ATPase. As to expression, expressed in guard cells, mesophyll cells, leaves and roots.

It is found in the membrane. The enzyme catalyses ATP + H2O + H(+)(in) = ADP + phosphate + 2 H(+)(out). Functionally, the plasma membrane H(+) ATPase of plants and fungi generates a proton gradient that drives the active transport of nutrients by H(+)-symport. The resulting external acidification and/or internal alkinization may mediate growth responses. This chain is ATPase 11, plasma membrane-type (AHA11), found in Arabidopsis thaliana (Mouse-ear cress).